Here is a 220-residue protein sequence, read N- to C-terminus: N-(5'-phosphoribosyl)anthranilate isomerase (220 aa).

It belongs to the TrpF family.

The enzyme catalyses N-(5-phospho-beta-D-ribosyl)anthranilate = 1-(2-carboxyphenylamino)-1-deoxy-D-ribulose 5-phosphate. It functions in the pathway amino-acid biosynthesis; L-tryptophan biosynthesis; L-tryptophan from chorismate: step 3/5. The polypeptide is N-(5'-phosphoribosyl)anthranilate isomerase (Gloeothece citriformis (strain PCC 7424) (Cyanothece sp. (strain PCC 7424))).